A 422-amino-acid polypeptide reads, in one-letter code: GTPase Obg (422 aa).

One can recognise an Obg domain in the interval methionine 1 to leucine 158. In terms of domain architecture, OBG-type G spans alanine 159–glutamate 329. Residues glycine 165–serine 172, phenylalanine 190–threonine 194, aspartate 212–glycine 215, asparagine 282–aspartate 285, and serine 310–valine 312 contribute to the GTP site. Mg(2+) contacts are provided by serine 172 and threonine 192. The OCT domain occupies valine 337 to glutamate 422.

The protein belongs to the TRAFAC class OBG-HflX-like GTPase superfamily. OBG GTPase family. As to quaternary structure, monomer. Mg(2+) is required as a cofactor.

The protein resides in the cytoplasm. Its function is as follows. An essential GTPase which binds GTP, GDP and possibly (p)ppGpp with moderate affinity, with high nucleotide exchange rates and a fairly low GTP hydrolysis rate. Plays a role in control of the cell cycle, stress response, ribosome biogenesis and in those bacteria that undergo differentiation, in morphogenesis control. The sequence is that of GTPase Obg from Pelotomaculum thermopropionicum (strain DSM 13744 / JCM 10971 / SI).